The following is a 500-amino-acid chain: Trehalose-6-phosphate synthase (500 aa).

R28 provides a ligand contact to D-glucose 6-phosphate. 48–49 (GG) serves as a coordination point for UDP-alpha-D-glucose. Residues Y108 and D162 each coordinate D-glucose 6-phosphate. R304 and K309 together coordinate UDP-alpha-D-glucose. R342 serves as a coordination point for D-glucose 6-phosphate. 407-411 (LVAKE) provides a ligand contact to UDP-alpha-D-glucose.

The protein belongs to the glycosyltransferase 20 family. Homotetramer.

The enzyme catalyses ADP-alpha-D-glucose + D-glucose 6-phosphate = alpha,alpha-trehalose 6-phosphate + ADP + H(+). It carries out the reaction CDP-alpha-D-glucose + D-glucose 6-phosphate = alpha,alpha-trehalose 6-phosphate + CDP + H(+). It catalyses the reaction GDP-alpha-D-glucose + D-glucose 6-phosphate = alpha,alpha-trehalose 6-phosphate + GDP + H(+). The catalysed reaction is TDP-alpha-D-glucose + D-glucose 6-phosphate = 5-methyl-UDP + alpha,alpha-trehalose 6-phosphate + H(+). The enzyme catalyses D-glucose 6-phosphate + UDP-alpha-D-glucose = alpha,alpha-trehalose 6-phosphate + UDP + H(+). The protein operates within glycan biosynthesis; trehalose biosynthesis. In terms of biological role, probably involved in the osmoprotection via the biosynthesis of trehalose and in the production of glycogen and alpha-glucan via the TreS-Pep2 branch involved in the biosynthesis of maltose-1-phosphate (M1P). Catalyzes the transfer of glucose from UDP-glucose (UDP-Glc) to D-glucose 6-phosphate (Glc-6-P) to form trehalose-6-phosphate. Probably also able to use ADP-Glc, CDP-Glc, GDP-Glc and TDP-Glc as glucosyl donors. The polypeptide is Trehalose-6-phosphate synthase (Mycobacterium tuberculosis (strain CDC 1551 / Oshkosh)).